A 79-amino-acid polypeptide reads, in one-letter code: MTTTKTMLVAFVLTLFFVISSVHCSDGTSGYGITEATKRCFTPAPCTRGLFYCQTFCSSLSAVLIGVCESGICCCILNQ.

The N-terminal stretch at methionine 1 to cysteine 24 is a signal peptide. Disulfide bonds link cysteine 40-cysteine 75, cysteine 46-cysteine 68, cysteine 53-cysteine 73, and cysteine 57-cysteine 74.

It belongs to the DEFL family.

It is found in the secreted. The polypeptide is Defensin-like protein 117 (Arabidopsis thaliana (Mouse-ear cress)).